A 453-amino-acid polypeptide reads, in one-letter code: Protein FAM117A (453 aa).

A compositionally biased stretch (gly residues) spans 1–25 (MAGAAAGGRGGGAWGPGRGGAGGLR). The disordered stretch occupies residues 1 to 45 (MAGAAAGGRGGGAWGPGRGGAGGLRRGCSPPAPAGSPRAGLQPLR). Phosphoserine is present on residues Ser29 and Ser67. The stretch at 149–175 (TDHRKEISKLKQQLQRTKLSRSGKEKE) forms a coiled coil. The tract at residues 159 to 201 (KQQLQRTKLSRSGKEKERGSPLLGDHAVRGALRASPPSFPSGS) is disordered. 4 positions are modified to phosphoserine: Ser178, Ser193, Ser201, and Ser213. The segment covering 269-278 (SSPSMSLASP) has biased composition (low complexity). The interval 269–320 (SSPSMSLASPQPCGLASHEEHRGAAEELASTPNDKASSPGHPAFLEDGSPSP) is disordered. Thr299 carries the phosphothreonine modification. 2 positions are modified to phosphoserine: Ser319 and Ser327. Phosphothreonine is present on Thr354. A compositionally biased stretch (pro residues) spans 406–416 (GSPLPPASPRP). The segment at 406–453 (GSPLPPASPRPPPRKDPEASKASPLPFEPWQRTPPSEEPVLFQSSLMV) is disordered. Phosphoserine is present on residues Ser413 and Ser428.

This sequence belongs to the FAM117 family.

The sequence is that of Protein FAM117A (FAM117A) from Homo sapiens (Human).